A 567-amino-acid polypeptide reads, in one-letter code: Geranylgeranyl transferase type-2 subunit alpha (567 aa).

PFTA repeat units follow at residues 44–78, 88–122, 124–158, 159–193, 207–241, and 363–397; these read LDES…QLET, LVKA…RLPE, NWTR…QAAV, PPAE…QLHP, VLLK…RADP, and VLQS…ALDP. Ser98 carries the phosphoserine modification. 5 LRR repeats span residues 442 to 463, 464 to 486, 487 to 508, 509 to 530, and 534 to 555; these read EVRV…EQLL, LVTH…AALR, CLEV…TNLP, RLQE…QPLA, and RLVL…LEQL.

Belongs to the protein prenyltransferase subunit alpha family. As to quaternary structure, heterotrimer composed of RABGGTA, RABGGTB and CHM; within this trimer, RABGGTA and RABGGTB form the catalytic component B, while CHM (component A) mediates peptide substrate binding. The Rab GGTase dimer (RGGT) interacts with CHM (component A) prior to Rab protein binding; the association is stabilized by geranylgeranyl pyrophosphate (GGpp). The CHM:RGGT:Rab complex is destabilized by GGpp. Interacts with non-phosphorylated form of RAB8A; phosphorylation of RAB8A at 'Thr-72' disrupts this interaction.

It catalyses the reaction geranylgeranyl diphosphate + L-cysteinyl-[protein] = S-geranylgeranyl-L-cysteinyl-[protein] + diphosphate. Its activity is regulated as follows. The enzymatic reaction requires the aid of a Rab escort protein (also called component A), such as CHM. Its function is as follows. Catalyzes the transfer of a geranylgeranyl moiety from geranylgeranyl diphosphate to both cysteines of Rab proteins with the C-terminal sequence -XXCC, -XCXC and -CCXX, such as RAB1A, RAB3A, RAB5A and RAB7A. This Pongo abelii (Sumatran orangutan) protein is Geranylgeranyl transferase type-2 subunit alpha (RABGGTA).